Here is a 368-residue protein sequence, read N- to C-terminus: MPINKYKAAVVTSEPVWENLEGGVVKTIEFINEAGKAGCKLIAFPEVWIPGYPYWMWKVNYLQSLPMLKAYRENSIAMDSSEMRRIRAAARDNQIYVSIGVSEIDHATLYLTQVLISPLGDVINHRRKIKPTHVEKLVYGDGSGDSFEPVTQTEIGRLGQLNCWENMNPFLKSLAVARGEQIHVAAWPVYPDLSKQVHPDPATNYADPASDLVTPAYAIETGTWVLAPFQRISVEGLKRHTPPGVEPETDATPYNGHARIFRPDGSLYAKPAVDFDGLMYVDIDLNESHLTKALADFAGHYMRPDLIRLLVDTRRKELVTEVGGGDNGGIQSYSTMARLGLDRPLEEEDYRQGTDAGETEKASSNGHA.

Positions 6-285 constitute a CN hydrolase domain; that stretch reads YKAAVVTSEP…DGLMYVDIDL (280 aa). The active-site Proton acceptor is Glu-46. Residue Lys-128 is part of the active site. Cys-163 serves as the catalytic Nucleophile. The disordered stretch occupies residues 341–368; that stretch reads LDRPLEEEDYRQGTDAGETEKASSNGHA.

This sequence belongs to the carbon-nitrogen hydrolase superfamily. Nitrilase family. Oligomer of dimers, forming left-handed helical fibers.

It carries out the reaction formamide = hydrogen cyanide + H2O. Functionally, catalyzes the hydration of cyanide to formamide. Degradation of cyanide may be important for plant pathogenic fungi in infection of cyanogenic plants. The protein is Cyanide hydratase of Microdochium sorghi (Zonate leaf spot disease fungus).